The sequence spans 198 residues: Putative pseudouridine methyltransferase (198 aa).

Residues Leu-132 and Cys-186 each coordinate S-adenosyl-L-methionine.

The protein belongs to the methyltransferase superfamily. TrmY family.

It localises to the cytoplasm. The protein is Putative pseudouridine methyltransferase of Vibrio vulnificus (strain CMCP6).